The primary structure comprises 508 residues: Photosystem II CP47 reaction center protein (508 aa).

The next 6 helical transmembrane spans lie at 21–36 (AVHI…WAGS), 101–115 (IILS…IWHW), 140–156 (GIHL…FGAF), 203–218 (IAAG…FHLS), 237–252 (VLSS…AFVV), and 457–472 (NFAL…HGGR).

It belongs to the PsbB/PsbC family. PsbB subfamily. In terms of assembly, PSII is composed of 1 copy each of membrane proteins PsbA, PsbB, PsbC, PsbD, PsbE, PsbF, PsbH, PsbI, PsbJ, PsbK, PsbL, PsbM, PsbT, PsbX, PsbY, PsbZ, Psb30/Ycf12, at least 3 peripheral proteins of the oxygen-evolving complex and a large number of cofactors. It forms dimeric complexes. The cofactor is Binds multiple chlorophylls. PSII binds additional chlorophylls, carotenoids and specific lipids..

The protein localises to the plastid. The protein resides in the chloroplast thylakoid membrane. Functionally, one of the components of the core complex of photosystem II (PSII). It binds chlorophyll and helps catalyze the primary light-induced photochemical processes of PSII. PSII is a light-driven water:plastoquinone oxidoreductase, using light energy to abstract electrons from H(2)O, generating O(2) and a proton gradient subsequently used for ATP formation. The protein is Photosystem II CP47 reaction center protein of Chaetosphaeridium globosum (Charophycean green alga).